Here is a 469-residue protein sequence, read N- to C-terminus: Citrate synthase, mitochondrial (469 aa).

The N-terminal 31 residues, 1 to 31 (MTLLTASSRAAARLLGAKNSSCIIFAARHAS), are a transit peptide targeting the mitochondrion. Residues His-304 and His-350 contribute to the active site. An oxaloacetate-binding site is contributed by Arg-359. Asp-405 is a catalytic residue. Residues Arg-431 and Arg-451 each contribute to the oxaloacetate site.

Belongs to the citrate synthase family. In terms of assembly, homodimer.

It is found in the mitochondrion matrix. It carries out the reaction oxaloacetate + acetyl-CoA + H2O = citrate + CoA + H(+). It functions in the pathway carbohydrate metabolism; tricarboxylic acid cycle; isocitrate from oxaloacetate: step 1/2. Key enzyme of the Krebs tricarboxylic acid cycle which catalyzes the synthesis of citrate from acetyl coenzyme A and oxaloacetate. This Amblyrhynchus cristatus (Galapagos marine iguana) protein is Citrate synthase, mitochondrial (CS).